The sequence spans 332 residues: UPF0285 protein MK0078 (332 aa).

It belongs to the UPF0285 family.

The polypeptide is UPF0285 protein MK0078 (Methanopyrus kandleri (strain AV19 / DSM 6324 / JCM 9639 / NBRC 100938)).